The chain runs to 217 residues: Phosphate-specific transport system accessory protein PhoU homolog 2 (217 aa).

This sequence belongs to the PhoU family. As to quaternary structure, homodimer.

The protein localises to the cytoplasm. Its function is as follows. Plays a role in the regulation of phosphate uptake. The protein is Phosphate-specific transport system accessory protein PhoU homolog 2 of Methanothermobacter thermautotrophicus (strain ATCC 29096 / DSM 1053 / JCM 10044 / NBRC 100330 / Delta H) (Methanobacterium thermoautotrophicum).